Reading from the N-terminus, the 725-residue chain is Aminopeptidase RNPEPL1 (725 aa).

Residue 326-330 (VAMEN) coordinates substrate. Residue histidine 353 coordinates Zn(2+). Glutamate 354 (proton acceptor) is an active-site residue. Zn(2+) contacts are provided by histidine 357 and glutamate 376. The segment at 676 to 699 (GLGSSTEPASEPSTELGKAEADTD) is disordered. Low complexity predominate over residues 679 to 690 (SSTEPASEPSTE).

The protein belongs to the peptidase M1 family. Requires Zn(2+) as cofactor. Ubiquitously expressed. Expressed at relatively higher levels in heart and skeletal muscle.

It catalyses the reaction Release of N-terminal amino acids, preferentially methionine, from peptides and arylamides.. Its activity is regulated as follows. Inhibited by calcium but not affected by chloride ions. Inhibited by amastatin and to a lower extent by bestatin. Weakly inhibited by puromycin. Functionally, broad specificity aminopeptidase which preferentially hydrolyzes an N-terminal methionine, citrulline or glutamine. In Homo sapiens (Human), this protein is Aminopeptidase RNPEPL1.